We begin with the raw amino-acid sequence, 347 residues long: Melatonin receptor type 1B-B (347 aa).

The Extracellular portion of the chain corresponds to 1 to 36 (MPENIAFLTNSTDLGHVGRALGSSARPAWAIAVLAS). The N-linked (GlcNAc...) asparagine glycan is linked to N10. Residues 37-57 (VLIFTTVVDVLGNLLVIISVF) traverse the membrane as a helical segment. The Cytoplasmic portion of the chain corresponds to 58 to 72 (RNRKLRNAGNVFVVS). A helical transmembrane segment spans residues 73–93 (LAFADLVVAFYPYPLVLYAIF). The Extracellular portion of the chain corresponds to 94–105 (HDGWSLGETQCK). C104 and C181 are disulfide-bonded. A helical membrane pass occupies residues 106–126 (ISGFLMGLSVIGSVFNITGIA). The Cytoplasmic segment spans residues 127-148 (INRYCYICHSFAYGRLYSFRNT). Residues 149-169 (LLLVALIWALTVLAILPNFFV) traverse the membrane as a helical segment. The Extracellular segment spans residues 170–191 (GSLSYDPRVYSCTFTQTASSSY). Residues 192–212 (TVVVVVVHFLVPIAVVTFCYL) traverse the membrane as a helical segment. The Cytoplasmic segment spans residues 213–244 (RIWVLVIQVRRKVKSEERSRVRPSDLRNFVTM). Residues 245–265 (FVVFVLFAICWAPLNLIGLVV) traverse the membrane as a helical segment. The Extracellular portion of the chain corresponds to 266-278 (AINPEVMAPRVPE). The chain crosses the membrane as a helical span at residues 279–299 (WLFVVSYFMAYFNSCLNAIIY). Over 300–347 (GLLNRNFRKEYVRIMTAVWIPRRFVTETSRAATDGMRSKPSPAINNNE) the chain is Cytoplasmic.

This sequence belongs to the G-protein coupled receptor 1 family.

Its subcellular location is the cell membrane. Its function is as follows. High affinity receptor for melatonin. The activity of this receptor is mediated by pertussis toxin sensitive G proteins that inhibits adenylate cyclase activity. In Danio rerio (Zebrafish), this protein is Melatonin receptor type 1B-B (mtnr1bb).